Here is a 119-residue protein sequence, read N- to C-terminus: MDIEEIKRQKMMELQQQQAQGAPNPEEIQQQQEQERAAYEAQKKQIMKKILSEEARHRLSNIKMVKPEFAEQVEMQLIQLAQSGRLPIPVSDEYFKTLLDQLYTMGSAKKKRDIKFVRK.

The segment covering 1 to 11 (MDIEEIKRQKM) has biased composition (basic and acidic residues). The interval 1-36 (MDIEEIKRQKMMELQQQQAQGAPNPEEIQQQQEQER) is disordered. Residues 15–32 (QQQQAQGAPNPEEIQQQQ) are compositionally biased toward low complexity.

It belongs to the PDCD5 family.

The chain is DNA-binding protein Maeo_0998 from Methanococcus aeolicus (strain ATCC BAA-1280 / DSM 17508 / OCM 812 / Nankai-3).